The sequence spans 862 residues: Eukaryotic translation initiation factor 3 subunit C (862 aa).

The tract at residues 1–81 (MSSRFFYGGG…EEEEKVTVVK (81 aa)) is disordered. Positions 17–54 (SSDEEELYSDREEEEKSEEEESSEEEDETSEEEESDEE) are enriched in acidic residues. A compositionally biased stretch (basic and acidic residues) spans 55-65 (TGAKKFLKDVA). A compositionally biased stretch (acidic residues) spans 66 to 75 (SDSEEEEEEE). The region spanning 600 to 774 (FHMHINLELL…NAIVFRKGVE (175 aa)) is the PCI domain. A disordered region spans residues 813 to 862 (RDQGAGARGGRGSGRGGQARGGPRFPGGQQGRRPGGQQFGGGALGGAIKA). Residues 818–862 (GARGGRGSGRGGQARGGPRFPGGQQGRRPGGQQFGGGALGGAIKA) show a composition bias toward gly residues.

This sequence belongs to the eIF-3 subunit C family. As to quaternary structure, component of the eukaryotic translation initiation factor 3 (eIF-3) complex.

The protein localises to the cytoplasm. In terms of biological role, component of the eukaryotic translation initiation factor 3 (eIF-3) complex, which is involved in protein synthesis of a specialized repertoire of mRNAs and, together with other initiation factors, stimulates binding of mRNA and methionyl-tRNAi to the 40S ribosome. The eIF-3 complex specifically targets and initiates translation of a subset of mRNAs involved in cell proliferation. The protein is Eukaryotic translation initiation factor 3 subunit C (nip1) of Neosartorya fischeri (strain ATCC 1020 / DSM 3700 / CBS 544.65 / FGSC A1164 / JCM 1740 / NRRL 181 / WB 181) (Aspergillus fischerianus).